The sequence spans 203 residues: Glycerol-3-phosphate acyltransferase (203 aa).

4 helical membrane passes run 6-26, 82-102, 118-138, and 141-161; these read LTLL…AVLV, AISL…PIFF, APIG…LVLI, and YSSL…WWLD.

It belongs to the PlsY family. As to quaternary structure, probably interacts with PlsX.

Its subcellular location is the cell inner membrane. It carries out the reaction an acyl phosphate + sn-glycerol 3-phosphate = a 1-acyl-sn-glycero-3-phosphate + phosphate. The protein operates within lipid metabolism; phospholipid metabolism. Its function is as follows. Catalyzes the transfer of an acyl group from acyl-phosphate (acyl-PO(4)) to glycerol-3-phosphate (G3P) to form lysophosphatidic acid (LPA). This enzyme utilizes acyl-phosphate as fatty acyl donor, but not acyl-CoA or acyl-ACP. This is Glycerol-3-phosphate acyltransferase from Shewanella sp. (strain ANA-3).